We begin with the raw amino-acid sequence, 149 residues long: MHCPFCTAKDTKVIDSRLVGGGHQVRRRRECNDCHERFTTFEGAELVMPRVIKQDGSREPFNEDKLLNGLNRALEKRPVSTEQVEEVVNIIKSQLRATGEREVSSHLVGECIMEALKKLDKVAYVRFASVYRSFEDIREFGEEIARLGE.

Residues 3-34 (CPFCTAKDTKVIDSRLVGGGHQVRRRRECNDC) fold into a zinc finger. In terms of domain architecture, ATP-cone spans 49–139 (PRVIKQDGSR…VYRSFEDIRE (91 aa)).

This sequence belongs to the NrdR family. Zn(2+) is required as a cofactor.

Its function is as follows. Negatively regulates transcription of bacterial ribonucleotide reductase nrd genes and operons by binding to NrdR-boxes. In Pseudoalteromonas translucida (strain TAC 125), this protein is Transcriptional repressor NrdR.